The following is a 127-amino-acid chain: Promotilin (127 aa).

Residues 1-25 (MLSRKAVAALLLVHVTAMLASQTEG) form the signal peptide. Residues 41 to 67 (REQNKRLRKSLRVQQRSKAAGRLEPQE) are disordered.

The protein belongs to the motilin family. As to expression, present in the gut mucosa with the exception of the gastric corpus. Also present in medulla oblongata, nucleus of the solitary tract, hypophysis, spinal cord, hypothalamus, and cerebellum but not in the cerebral cortex.

It is found in the secreted. Plays an important role in the regulation of interdigestive gastrointestinal motility and indirectly causes rhythmic contraction of duodenal and colonic smooth muscle. This chain is Promotilin (MLN), found in Cavia porcellus (Guinea pig).